We begin with the raw amino-acid sequence, 167 residues long: Probable membrane-bound hydrogenase subunit mbhJ (167 aa).

Positions 35, 38, 102, and 132 each coordinate [4Fe-4S] cluster.

It belongs to the complex I 20 kDa subunit family. As to quaternary structure, the membrane-bound hydrogenase complex is composed of MbhK and MbhL, but may also contain MbhJ. [4Fe-4S] cluster serves as cofactor.

The protein resides in the cell membrane. The catalysed reaction is H2 + 2 oxidized [2Fe-2S]-[ferredoxin] = 2 reduced [2Fe-2S]-[ferredoxin] + 2 H(+). With respect to regulation, inhibited by 0.1 mM Cu(2+). Functionally, probable subunit of a hydrogen-evolving hydrogenase that utilizes protons both as a substrate for hydrogen production and proton translocation. Acts by coupling the redox reaction via ferredoxin and iron-sulfur (Fe-S) clusters to proton translocation across the membrane, thereby conserving the redox energy in a proton gradient. The polypeptide is Probable membrane-bound hydrogenase subunit mbhJ (Pyrococcus furiosus (strain ATCC 43587 / DSM 3638 / JCM 8422 / Vc1)).